The following is a 316-amino-acid chain: Protein lifeguard 2 (316 aa).

The interval 1-46 (MTQGKLSVANKAPGTEGQQQANGEKKETPAVPSAPPSYEEATSGEG) is disordered. 3 helical membrane-spanning segments follow: residues 106 to 126 (VYTI…LFTF), 138 to 158 (PGWY…LACC), and 165 to 185 (FPWN…LTGM). N-linked (GlcNAc...) asparagine glycosylation is present at Asn191. The next 4 helical transmembrane spans lie at 194-214 (SVLL…VFSF), 225-245 (GVLF…AILL), 251-271 (PWLH…FLAF), and 290-310 (IFGA…FLQL).

Belongs to the BI1 family. LFG subfamily. In terms of assembly, interacts with FAS/TNFRSF6 and BAX.

It is found in the cell membrane. It localises to the membrane raft. The protein localises to the postsynaptic cell membrane. In terms of biological role, antiapoptotic protein which protects cells uniquely from Fas-induced apoptosis. Regulates Fas-mediated apoptosis in neurons by interfering with caspase-8 activation. Plays a role in cerebellar development by affecting cerebellar size, internal granular layer (IGL) thickness, and Purkinje cell (PC) development. This chain is Protein lifeguard 2 (FAIM2), found in Bos taurus (Bovine).